Consider the following 514-residue polypeptide: Probable cytosol aminopeptidase (514 aa).

Lysine 266 and aspartate 271 together coordinate Mn(2+). The active site involves lysine 278. Residues aspartate 289, aspartate 357, and glutamate 359 each contribute to the Mn(2+) site. Arginine 361 is an active-site residue.

The protein belongs to the peptidase M17 family. Mn(2+) serves as cofactor.

Its subcellular location is the cytoplasm. It carries out the reaction Release of an N-terminal amino acid, Xaa-|-Yaa-, in which Xaa is preferably Leu, but may be other amino acids including Pro although not Arg or Lys, and Yaa may be Pro. Amino acid amides and methyl esters are also readily hydrolyzed, but rates on arylamides are exceedingly low.. The catalysed reaction is Release of an N-terminal amino acid, preferentially leucine, but not glutamic or aspartic acids.. Its function is as follows. Presumably involved in the processing and regular turnover of intracellular proteins. Catalyzes the removal of unsubstituted N-terminal amino acids from various peptides. The polypeptide is Probable cytosol aminopeptidase (Oleidesulfovibrio alaskensis (strain ATCC BAA-1058 / DSM 17464 / G20) (Desulfovibrio alaskensis)).